The following is a 403-amino-acid chain: Phosphopentomutase (403 aa).

6 residues coordinate Mn(2+): D13, D298, H303, D339, H340, and H351.

This sequence belongs to the phosphopentomutase family. Requires Mn(2+) as cofactor.

The protein resides in the cytoplasm. It carries out the reaction 2-deoxy-alpha-D-ribose 1-phosphate = 2-deoxy-D-ribose 5-phosphate. The catalysed reaction is alpha-D-ribose 1-phosphate = D-ribose 5-phosphate. It functions in the pathway carbohydrate degradation; 2-deoxy-D-ribose 1-phosphate degradation; D-glyceraldehyde 3-phosphate and acetaldehyde from 2-deoxy-alpha-D-ribose 1-phosphate: step 1/2. Its function is as follows. Isomerase that catalyzes the conversion of deoxy-ribose 1-phosphate (dRib-1-P) and ribose 1-phosphate (Rib-1-P) to deoxy-ribose 5-phosphate (dRib-5-P) and ribose 5-phosphate (Rib-5-P), respectively. The protein is Phosphopentomutase of Streptococcus gordonii (strain Challis / ATCC 35105 / BCRC 15272 / CH1 / DL1 / V288).